The primary structure comprises 592 residues: MIDLSTMKQQIETLLNQAIERLKTKGVLKPEVTPVIKITHTTDPQHGDFATNLALTLSKAAGMSPHALAEKIVEALPPSGQITEVEIAGPGFINFFVTEGSYQTVVSSILKAGKDYGRSEMGKGQRVHMEYVSANPTGPLHVGHGRGAAYGACVANLLNAAGFEVHREYYVNDAGRQMGILALSVWVRYLQGYEASIELPKNAYQGEYIIDIAEALKAKYGKQFYHSVESIQAKIPEEIDSNADPEAYLDVWVTAQKDLLGPKDFECVFQAALDSILNDIKNDLEEFGVTYDDWFPESRLVREGLIQEGLDLLTKHGYVYEKNGAQWFRATALGDEKDRVLIRKNGLPTYFAADVAYHLHKFNQGYDQIIDIFGADHHGYIPRIRGFLKGLGKAPEKLHILLVQFAILYRGNEKVSMSTRGGTFVTLRELRHEVGNDAARFFYIMRKPDQHLDFDLELAKSQSNENPVYYIQYAHARICSVFRQLKTTQKNWDRPRGMENLSLLSTNYEKELLATLGRYPEVIKRAAMNYAPHLLAHYLQTLANQFHTYYNAERFLIEDDNLRNARLNLINAVQQIIRNGLTLLGVSAPEEM.

A 'HIGH' region motif is present at residues 134–144 (ANPTGPLHVGH).

Belongs to the class-I aminoacyl-tRNA synthetase family. In terms of assembly, monomer.

The protein localises to the cytoplasm. The catalysed reaction is tRNA(Arg) + L-arginine + ATP = L-arginyl-tRNA(Arg) + AMP + diphosphate. The protein is Arginine--tRNA ligase of Coxiella burnetii (strain RSA 493 / Nine Mile phase I).